A 319-amino-acid polypeptide reads, in one-letter code: tRNA-cytidine(32) 2-sulfurtransferase (319 aa).

A PP-loop motif motif is present at residues 43 to 48 (SGGKDS). The [4Fe-4S] cluster site is built by Cys118, Cys121, and Cys209.

It belongs to the TtcA family. As to quaternary structure, homodimer. Mg(2+) serves as cofactor. [4Fe-4S] cluster is required as a cofactor.

It is found in the cytoplasm. It catalyses the reaction cytidine(32) in tRNA + S-sulfanyl-L-cysteinyl-[cysteine desulfurase] + AH2 + ATP = 2-thiocytidine(32) in tRNA + L-cysteinyl-[cysteine desulfurase] + A + AMP + diphosphate + H(+). It participates in tRNA modification. In terms of biological role, catalyzes the ATP-dependent 2-thiolation of cytidine in position 32 of tRNA, to form 2-thiocytidine (s(2)C32). The sulfur atoms are provided by the cysteine/cysteine desulfurase (IscS) system. This is tRNA-cytidine(32) 2-sulfurtransferase from Neisseria meningitidis serogroup A / serotype 4A (strain DSM 15465 / Z2491).